The sequence spans 79 residues: Cytochrome b (79 aa).

A run of 3 helical transmembrane segments spans residues 1-7 (TALFLAM), 31-52 (WLIR…YLHI), and 67-79 (WNIG…LTMM). Heme b contacts are provided by histidine 37 and histidine 51.

It belongs to the cytochrome b family. In terms of assembly, the cytochrome bc1 complex contains 3 respiratory subunits (MT-CYB, CYC1 and UQCRFS1), 2 core proteins (UQCRC1 and UQCRC2) and probably 6 low-molecular weight proteins. Heme b serves as cofactor.

The protein localises to the mitochondrion inner membrane. Its function is as follows. Component of the ubiquinol-cytochrome c reductase complex (complex III or cytochrome b-c1 complex) that is part of the mitochondrial respiratory chain. The b-c1 complex mediates electron transfer from ubiquinol to cytochrome c. Contributes to the generation of a proton gradient across the mitochondrial membrane that is then used for ATP synthesis. This Julidochromis regani (Convict julie) protein is Cytochrome b (mt-cyb).